A 350-amino-acid polypeptide reads, in one-letter code: Protein-glutamate methylesterase/protein-glutamine glutaminase 2 (350 aa).

Positions 3–121 (RVLLVDDSPV…DPDYEEAVSE (119 aa)) constitute a Response regulatory domain. D54 is modified (4-aspartylphosphate). The region spanning 158 to 322 (IHQDIRVIVI…SFVYGMPGAA (165 aa)) is the CheB-type methylesterase domain. Active-site residues include S170, H197, and D290.

The protein belongs to the CheB family. In terms of processing, phosphorylated by CheA. Phosphorylation of the N-terminal regulatory domain activates the methylesterase activity.

It localises to the cytoplasm. The catalysed reaction is [protein]-L-glutamate 5-O-methyl ester + H2O = L-glutamyl-[protein] + methanol + H(+). It catalyses the reaction L-glutaminyl-[protein] + H2O = L-glutamyl-[protein] + NH4(+). In terms of biological role, involved in chemotaxis. Part of a chemotaxis signal transduction system that modulates chemotaxis in response to various stimuli. Catalyzes the demethylation of specific methylglutamate residues introduced into the chemoreceptors (methyl-accepting chemotaxis proteins or MCP) by CheR. Also mediates the irreversible deamidation of specific glutamine residues to glutamic acid. This is Protein-glutamate methylesterase/protein-glutamine glutaminase 2 from Methanospirillum hungatei JF-1 (strain ATCC 27890 / DSM 864 / NBRC 100397 / JF-1).